A 629-amino-acid polypeptide reads, in one-letter code: tRNA uridine 5-carboxymethylaminomethyl modification enzyme MnmG (629 aa).

FAD contacts are provided by residues 14 to 19 (GAGHAG), valine 126, and serine 181. Residue 273–287 (GPRYCPSIEDKVVRF) participates in NAD(+) binding. Glutamine 370 contacts FAD.

Belongs to the MnmG family. Homodimer. Heterotetramer of two MnmE and two MnmG subunits. FAD serves as cofactor.

It localises to the cytoplasm. In terms of biological role, NAD-binding protein involved in the addition of a carboxymethylaminomethyl (cmnm) group at the wobble position (U34) of certain tRNAs, forming tRNA-cmnm(5)s(2)U34. The chain is tRNA uridine 5-carboxymethylaminomethyl modification enzyme MnmG from Geobacillus thermodenitrificans (strain NG80-2).